A 776-amino-acid chain; its full sequence is Ent-8-alpha-hydroxylabd-13-en-15-yl diphosphate synthase CPS4, chloroplastic (776 aa).

Residues 1-60 (MSFASNATGFRIPLTTCVYPSPILRFNAKVGSGSSYGTTEAQRNMKCVDGIGRSRVVAVA) constitute a chloroplast transit peptide. Position 226 (lysine 226) interacts with substrate. Aspartate 357 and aspartate 359 together coordinate Mg(2+). The short motif at 357–360 (DSDD) is the DXDD motif element. Lysine 443 lines the substrate pocket.

The protein belongs to the terpene synthase family. Mg(2+) serves as cofactor.

It is found in the plastid. The protein resides in the chloroplast. It catalyses the reaction ent-8alpha-hydroxylabd-13-en-15-yl diphosphate = (2E,6E,10E)-geranylgeranyl diphosphate + H2O. The protein operates within secondary metabolite biosynthesis; terpenoid biosynthesis. Functionally, involved in diterpenoid biosynthesis. Catalyzes the conversion of all-trans-geranylgeranyl diphosphate to ent-8alpha-hydroxylabd-13-en-15-yl diphosphate. This is Ent-8-alpha-hydroxylabd-13-en-15-yl diphosphate synthase CPS4, chloroplastic from Salvia miltiorrhiza (Chinese sage).